The sequence spans 473 residues: 3-isopropylmalate dehydratase large subunit (473 aa).

3 residues coordinate [4Fe-4S] cluster: C354, C414, and C417.

It belongs to the aconitase/IPM isomerase family. LeuC type 1 subfamily. In terms of assembly, heterodimer of LeuC and LeuD. It depends on [4Fe-4S] cluster as a cofactor.

The enzyme catalyses (2R,3S)-3-isopropylmalate = (2S)-2-isopropylmalate. Its pathway is amino-acid biosynthesis; L-leucine biosynthesis; L-leucine from 3-methyl-2-oxobutanoate: step 2/4. In terms of biological role, catalyzes the isomerization between 2-isopropylmalate and 3-isopropylmalate, via the formation of 2-isopropylmaleate. In Mycobacterium bovis (strain ATCC BAA-935 / AF2122/97), this protein is 3-isopropylmalate dehydratase large subunit.